A 1365-amino-acid chain; its full sequence is Serine-aspartate repeat-containing protein D (1365 aa).

A signal peptide spans M1–I35. A YSIRK-G/S signaling motif motif is present at residues F23–S34. The tract at residues L36–E568 is ligand binding A region. The segment at E54–S185 is disordered. Polar residues-rich tracts occupy residues E62–Q71 and E94–K109. Basic and acidic residues predominate over residues K130–N145. Composition is skewed to polar residues over residues T146–A155 and N163–N173. Residues E174–T183 are compositionally biased toward basic and acidic residues. CNA-B domains follow at residues V569 to P680, K681 to P791, K792 to P901, T902 to P1012, and K1013 to T1123. 3 disordered regions span residues E857 to G884, Y972 to T991, and E1078 to A1341. Polar residues-rich tracts occupy residues S860–S869 and Y972–N981. 2 stretches are compositionally biased toward acidic residues: residues T1091 to E1101 and Y1118 to S1304. Residues L1328–G1332 carry the LPXTG sorting signal motif. T1331 bears the Pentaglycyl murein peptidoglycan amidated threonine mark. Residues G1332 to K1365 constitute a propeptide, removed by sortase.

It belongs to the serine-aspartate repeat-containing protein (SDr) family. In terms of assembly, interacts with host DSG1; this interaction increases S.aureus adherence to keratinocytes.

It localises to the secreted. It is found in the cell wall. Functionally, cell surface-associated calcium-binding protein which plays an important role in adhesion and pathogenesis. Mediates interactions with components of the extracellular matrix such as host DSG1 to promote bacterial adhesion to host cells. Contributes to the resistance to killing by innate immune components such as neutrophils present in blood and thus attenuates bacterial clearance. The polypeptide is Serine-aspartate repeat-containing protein D (sdrD) (Staphylococcus aureus (strain MSSA476)).